The primary structure comprises 111 residues: Phosphoribosyl-ATP pyrophosphatase (111 aa).

Belongs to the PRA-PH family.

It is found in the cytoplasm. It catalyses the reaction 1-(5-phospho-beta-D-ribosyl)-ATP + H2O = 1-(5-phospho-beta-D-ribosyl)-5'-AMP + diphosphate + H(+). It participates in amino-acid biosynthesis; L-histidine biosynthesis; L-histidine from 5-phospho-alpha-D-ribose 1-diphosphate: step 2/9. In Pseudomonas putida (strain ATCC 700007 / DSM 6899 / JCM 31910 / BCRC 17059 / LMG 24140 / F1), this protein is Phosphoribosyl-ATP pyrophosphatase.